The following is a 666-amino-acid chain: Semaphorin-7A (666 aa).

A disordered region spans residues 1–21 (MTPPPPGRAAPSAPRARVPGP). The signal sequence occupies residues 1–44 (MTPPPPGRAAPSAPRARVPGPPARLGLPLRLRLLLLLWAAAASA). Over residues 9–21 (AAPSAPRARVPGP) the composition is skewed to low complexity. Residues 53–490 (RIFAVWKGHV…SQWEVSQVPL (438 aa)) enclose the Sema domain. Asn-105 carries N-linked (GlcNAc...) asparagine glycosylation. Residues Cys-120 and Cys-126 are joined by a disulfide bond. An Asymmetric dimethylarginine modification is found at Arg-135. Cys-143 and Cys-152 are disulfide-bonded. 2 N-linked (GlcNAc...) asparagine glycosylation sites follow: Asn-157 and Asn-258. 7 disulfides stabilise this stretch: Cys-266–Cys-366, Cys-291–Cys-335, Cys-493–Cys-511, Cys-500–Cys-541, Cys-503–Cys-518, Cys-566–Cys-613, and Cys-587–Cys-596. Residues 267–269 (RGD) are interaction with integrins. Residues 267–269 (RGD) carry the Cell attachment site motif. Residue Asn-330 is glycosylated (N-linked (GlcNAc...) asparagine). One can recognise an Ig-like C2-type domain in the interval 544 to 629 (PKPDKAPLQK…YFREAQHWQL (86 aa)). The N-linked (GlcNAc...) asparagine glycan is linked to Asn-602. Residue Ala-648 is the site of GPI-anchor amidated alanine attachment. Positions 649–666 (ASLWLGVLPTLTLGLLVH) are cleaved as a propeptide — removed in mature form.

Belongs to the semaphorin family. As to quaternary structure, interacts with ITGA1 and ITGB1. Interacts with PLXNC1. As to expression, detected in skin keratinocytes and on endothelial cells from skin blood vessels (at protein level). Expressed in fibroblasts, keratinocytes, melanocytes, placenta, testis, ovary, spleen, brain, spinal cord, lung, heart, adrenal gland, lymph nodes, thymus, intestine and kidney.

The protein localises to the cell membrane. Plays an important role in integrin-mediated signaling and functions both in regulating cell migration and immune responses. Promotes formation of focal adhesion complexes, activation of the protein kinase PTK2/FAK1 and subsequent phosphorylation of MAPK1 and MAPK3. Promotes production of pro-inflammatory cytokines by monocytes and macrophages. Plays an important role in modulating inflammation and T-cell-mediated immune responses. Promotes axon growth in the embryonic olfactory bulb. Promotes attachment, spreading and dendrite outgrowth in melanocytes. The polypeptide is Semaphorin-7A (SEMA7A) (Homo sapiens (Human)).